A 342-amino-acid polypeptide reads, in one-letter code: S-adenosylmethionine:tRNA ribosyltransferase-isomerase (342 aa).

It belongs to the QueA family. Monomer.

The protein resides in the cytoplasm. It carries out the reaction 7-aminomethyl-7-carbaguanosine(34) in tRNA + S-adenosyl-L-methionine = epoxyqueuosine(34) in tRNA + adenine + L-methionine + 2 H(+). Its pathway is tRNA modification; tRNA-queuosine biosynthesis. Functionally, transfers and isomerizes the ribose moiety from AdoMet to the 7-aminomethyl group of 7-deazaguanine (preQ1-tRNA) to give epoxyqueuosine (oQ-tRNA). This Streptococcus sanguinis (strain SK36) protein is S-adenosylmethionine:tRNA ribosyltransferase-isomerase.